A 257-amino-acid polypeptide reads, in one-letter code: 1-(5-phosphoribosyl)-5-[(5-phosphoribosylamino)methylideneamino] imidazole-4-carboxamide isomerase (257 aa).

The protein belongs to the HisA/HisF family.

Its subcellular location is the cytoplasm. The enzyme catalyses 1-(5-phospho-beta-D-ribosyl)-5-[(5-phospho-beta-D-ribosylamino)methylideneamino]imidazole-4-carboxamide = 5-[(5-phospho-1-deoxy-D-ribulos-1-ylimino)methylamino]-1-(5-phospho-beta-D-ribosyl)imidazole-4-carboxamide. It participates in amino-acid biosynthesis; L-histidine biosynthesis; L-histidine from 5-phospho-alpha-D-ribose 1-diphosphate: step 4/9. In Neurospora crassa (strain ATCC 24698 / 74-OR23-1A / CBS 708.71 / DSM 1257 / FGSC 987), this protein is 1-(5-phosphoribosyl)-5-[(5-phosphoribosylamino)methylideneamino] imidazole-4-carboxamide isomerase (his-7).